A 337-amino-acid chain; its full sequence is Nucleoid-associated protein HSM_0096 (337 aa).

It belongs to the YejK family.

The protein resides in the cytoplasm. It localises to the nucleoid. The sequence is that of Nucleoid-associated protein HSM_0096 from Histophilus somni (strain 2336) (Haemophilus somnus).